Reading from the N-terminus, the 92-residue chain is Sec-independent protein translocase protein TatA (92 aa).

A helical transmembrane segment spans residues 1–21 (MGIFDWKHWIVILVVVVLVFG). Residues 44–92 (NDDEKPADPVVNPVPPAQPVHPQATQPITERRTFDVQAEKVEEPTRKDS) are disordered. The segment covering 72 to 92 (TERRTFDVQAEKVEEPTRKDS) has biased composition (basic and acidic residues).

The protein belongs to the TatA/E family. As to quaternary structure, the Tat system comprises two distinct complexes: a TatABC complex, containing multiple copies of TatA, TatB and TatC subunits, and a separate TatA complex, containing only TatA subunits. Substrates initially bind to the TatABC complex, which probably triggers association of the separate TatA complex to form the active translocon.

The protein localises to the cell inner membrane. Its function is as follows. Part of the twin-arginine translocation (Tat) system that transports large folded proteins containing a characteristic twin-arginine motif in their signal peptide across membranes. TatA could form the protein-conducting channel of the Tat system. This Pseudomonas fluorescens (strain SBW25) protein is Sec-independent protein translocase protein TatA.